A 240-amino-acid chain; its full sequence is Ribonuclease 3 (240 aa).

The region spanning 4–134 (SRQPLLDALG…LLGAIYLQHG (131 aa)) is the RNase III domain. Residue Glu44 participates in Mg(2+) binding. Residue Asp48 is part of the active site. Mg(2+) is bound by residues Asp120 and Glu123. Glu123 is an active-site residue. The region spanning 161-229 (DWKTSLQELT…AAAAWKALEV (69 aa)) is the DRBM domain.

It belongs to the ribonuclease III family. In terms of assembly, homodimer. Requires Mg(2+) as cofactor.

It localises to the cytoplasm. It carries out the reaction Endonucleolytic cleavage to 5'-phosphomonoester.. Digests double-stranded RNA. Involved in the processing of primary rRNA transcript to yield the immediate precursors to the large and small rRNAs (23S and 16S). Processes some mRNAs, and tRNAs when they are encoded in the rRNA operon. Processes pre-crRNA and tracrRNA of type II CRISPR loci if present in the organism. This is Ribonuclease 3 from Mycobacterium bovis (strain ATCC BAA-935 / AF2122/97).